Reading from the N-terminus, the 231-residue chain is 7-cyano-7-deazaguanine synthase (231 aa).

8-18 is an ATP binding site; sequence FSGGQDSTTCL. Positions 188, 197, 200, and 203 each coordinate Zn(2+).

Belongs to the QueC family. Requires Zn(2+) as cofactor.

It catalyses the reaction 7-carboxy-7-deazaguanine + NH4(+) + ATP = 7-cyano-7-deazaguanine + ADP + phosphate + H2O + H(+). It participates in purine metabolism; 7-cyano-7-deazaguanine biosynthesis. Functionally, catalyzes the ATP-dependent conversion of 7-carboxy-7-deazaguanine (CDG) to 7-cyano-7-deazaguanine (preQ(0)). This is 7-cyano-7-deazaguanine synthase from Escherichia coli (strain SMS-3-5 / SECEC).